The following is a 364-amino-acid chain: Nucleoporin SEH1 (364 aa).

WD repeat units follow at residues 10–49 (DHKD…EWNC), 55–96 (THSG…SNDK), 111–152 (DSRT…NLSQ), 160–210 (SCKL…RKYA), 217–258 (TVTD…KESS), and 275–314 (GHNS…NWKC). The disordered stretch occupies residues 326–364 (NGAAGQAGTPGAAGTPGGPASQNALQAVAGRKKAQLMPG). A compositionally biased stretch (low complexity) spans 327-338 (GAAGQAGTPGAA). Residues 355–364 (GRKKAQLMPG) are compositionally biased toward basic residues.

The protein belongs to the WD repeat SEC13 family. Component of the Nup107-160 subcomplex of the nuclear pore complex (NPC). The Nup107-160 subcomplex includes NUP160, NUP133, NUP107, NUP98, NUP85, NUP43, NUP37, SEH1 and SEC13. Component of the GATOR2 subcomplex, composed of MIOS, SEC13, SEH1L, WDR24 and WDR59. The GATOR2 complex interacts with CASTOR1 and CASTOR2; the interaction is negatively regulated by arginine. The GATOR2 complex interacts with SESN1, SESN2 and SESN3; the interaction is negatively regulated by amino acids.

It is found in the chromosome. It localises to the centromere. Its subcellular location is the kinetochore. The protein resides in the nucleus. The protein localises to the nuclear pore complex. It is found in the lysosome membrane. With respect to regulation, the GATOR2 complex is negatively regulated by the upstream amino acid sensors CASTOR1 and SESN2, which sequester the GATOR2 complex in absence of amino acids. In the presence of abundant amino acids, GATOR2 is released from CASTOR1 and SESN2 and activated. Functionally, component of the Nup107-160 subcomplex of the nuclear pore complex (NPC). The Nup107-160 subcomplex is required for the assembly of a functional NPC. The Nup107-160 subcomplex is also required for normal kinetochore microtubule attachment, mitotic progression and chromosome segregation. This subunit plays a role in recruitment of the Nup107-160 subcomplex to the kinetochore. In terms of biological role, as a component of the GATOR2 complex, functions as an activator of the amino acid-sensing branch of the mTORC1 signaling pathway. The GATOR2 complex indirectly activates mTORC1 through the inhibition of the GATOR1 subcomplex. GATOR2 probably acts as an E3 ubiquitin-protein ligase toward GATOR1. In the presence of abundant amino acids, the GATOR2 complex mediates ubiquitination of the NPRL2 core component of the GATOR1 complex, leading to GATOR1 inactivation. In the absence of amino acids, GATOR2 is inhibited, activating the GATOR1 complex. In Osmerus mordax (Rainbow smelt), this protein is Nucleoporin SEH1 (seh1l).